We begin with the raw amino-acid sequence, 184 residues long: Large ribosomal subunit protein uL15 (184 aa).

Residues Met-1–Lys-62 are disordered. The segment covering Arg-21–Asn-35 has biased composition (gly residues).

It belongs to the universal ribosomal protein uL15 family. Part of the 50S ribosomal subunit.

Binds to the 23S rRNA. This Chlorobaculum parvum (strain DSM 263 / NCIMB 8327) (Chlorobium vibrioforme subsp. thiosulfatophilum) protein is Large ribosomal subunit protein uL15.